A 99-amino-acid polypeptide reads, in one-letter code: Acylphosphatase (99 aa).

Positions 5-97 (IRQVMVRGRV…YAGERFSILS (93 aa)) constitute an Acylphosphatase-like domain. Catalysis depends on residues Arg20 and Asn38.

It belongs to the acylphosphatase family.

The enzyme catalyses an acyl phosphate + H2O = a carboxylate + phosphate + H(+). The protein is Acylphosphatase (acyP) of Rhodopseudomonas palustris (strain BisB5).